Consider the following 422-residue polypeptide: UPF0229 protein SO_2883 (422 aa).

The tract at residues 60–111 (SEPMFHQGKGGVRDRVHPGNDQFTRGDKIDRPQGGSGGGAGKGDASDSGEGN) is disordered. Basic and acidic residues predominate over residues 70–90 (GVRDRVHPGNDQFTRGDKIDR).

The protein belongs to the UPF0229 family.

The chain is UPF0229 protein SO_2883 from Shewanella oneidensis (strain ATCC 700550 / JCM 31522 / CIP 106686 / LMG 19005 / NCIMB 14063 / MR-1).